The primary structure comprises 326 residues: Beta-ketoacyl-[acyl-carrier-protein] synthase III 2 (326 aa).

Catalysis depends on residues C114 and H251. An ACP-binding region spans residues S252 to R256. Residue N281 is part of the active site.

Belongs to the thiolase-like superfamily. FabH family. In terms of assembly, homodimer.

It is found in the cytoplasm. The catalysed reaction is malonyl-[ACP] + acetyl-CoA + H(+) = 3-oxobutanoyl-[ACP] + CO2 + CoA. It participates in lipid metabolism; fatty acid biosynthesis. In terms of biological role, catalyzes the condensation reaction of fatty acid synthesis by the addition to an acyl acceptor of two carbons from malonyl-ACP. Catalyzes the first condensation reaction which initiates fatty acid synthesis and may therefore play a role in governing the total rate of fatty acid production. Possesses both acetoacetyl-ACP synthase and acetyl transacylase activities. Its substrate specificity determines the biosynthesis of branched-chain and/or straight-chain of fatty acids. This is Beta-ketoacyl-[acyl-carrier-protein] synthase III 2 from Staphylococcus epidermidis (strain ATCC 12228 / FDA PCI 1200).